A 393-amino-acid polypeptide reads, in one-letter code: GDSL esterase/lipase At1g28600 (393 aa).

An N-terminal signal peptide occupies residues 1–22; sequence MASLDSLVIFLFSTLFVTIVSS. Ser-38 functions as the Nucleophile in the catalytic mechanism. 2 N-linked (GlcNAc...) asparagine glycosylation sites follow: Asn-133 and Asn-317. Active-site residues include Asp-340 and His-343. An N-linked (GlcNAc...) asparagine glycan is attached at Asn-382.

This sequence belongs to the 'GDSL' lipolytic enzyme family.

It is found in the secreted. The protein is GDSL esterase/lipase At1g28600 of Arabidopsis thaliana (Mouse-ear cress).